The primary structure comprises 238 residues: Demethylmenaquinone methyltransferase (238 aa).

S-adenosyl-L-methionine contacts are provided by residues Thr65, Asp85, and 109-110; that span reads DA.

This sequence belongs to the class I-like SAM-binding methyltransferase superfamily. MenG/UbiE family.

It carries out the reaction a 2-demethylmenaquinol + S-adenosyl-L-methionine = a menaquinol + S-adenosyl-L-homocysteine + H(+). It functions in the pathway quinol/quinone metabolism; menaquinone biosynthesis; menaquinol from 1,4-dihydroxy-2-naphthoate: step 2/2. In terms of biological role, methyltransferase required for the conversion of demethylmenaquinol (DMKH2) to menaquinol (MKH2). This chain is Demethylmenaquinone methyltransferase, found in Roseiflexus castenholzii (strain DSM 13941 / HLO8).